The sequence spans 1176 residues: Pesticidal crystal protein Cry1Aa (1176 aa).

It belongs to the delta endotoxin family.

Promotes colloidosmotic lysis by binding to the midgut epithelial cells of many lepidopteran larvae. This chain is Pesticidal crystal protein Cry1Aa (cry1Aa), found in Bacillus thuringiensis subsp. aizawai.